Consider the following 64-residue polypeptide: Long neurotoxin MS5 (64 aa).

5 disulfides stabilise this stretch: cysteine 3-cysteine 24, cysteine 6-cysteine 11, cysteine 17-cysteine 41, cysteine 45-cysteine 57, and cysteine 58-cysteine 63.

Belongs to the three-finger toxin family. Ancestral subfamily. As to expression, expressed by the venom gland.

It localises to the secreted. Its function is as follows. Produces peripheral paralysis by blocking neuromuscular transmission at the postsynaptic site. Very weak inhibitor of the endogenous nicotinic acetylcholine receptors (nAChR) in the human rhabdomyosarcoma TE 671 cell line. This neurotoxin is lethal to zebrafish by injection at the back of the dorsolateral region, but is not toxic to mice by intraperitoneal injection. This Micrurus surinamensis (Surinam coral snake) protein is Long neurotoxin MS5.